Consider the following 346-residue polypeptide: NADH-ubiquinone oxidoreductase chain 2 (346 aa).

The next 11 membrane-spanning stretches (helical) occupy residues 1–21, 25–45, 60–80, 95–115, 124–144, 149–169, 178–195, 200–219, 242–262, 274–294, and 326–346; these read MNPHATPVLVLSLALGTTITI, HWVLAWTGLEINTLAIIPLIS, FLTQAAASALVLFSSMTNAWA, CLLLTAAIAIKLGLVPFHFWF, LMTALLLSTLMKFPPLTLLLM, LNPALLTAMALASAALGGWMG, ILAFSSISHLGWIAIILV, LALLTFYLYTIMTSAVFMAL, ATLMLVLLSLAGLPPLTGFMP, EMTPAAMAIAMLSLLSLFFYL, and AILASLSILLLPLSPMIHAIV.

Belongs to the complex I subunit 2 family.

The protein localises to the mitochondrion inner membrane. It carries out the reaction a ubiquinone + NADH + 5 H(+)(in) = a ubiquinol + NAD(+) + 4 H(+)(out). Core subunit of the mitochondrial membrane respiratory chain NADH dehydrogenase (Complex I) that is believed to belong to the minimal assembly required for catalysis. Complex I functions in the transfer of electrons from NADH to the respiratory chain. The immediate electron acceptor for the enzyme is believed to be ubiquinone. The sequence is that of NADH-ubiquinone oxidoreductase chain 2 (MT-ND2) from Anas acuta (Northern pintail).